Reading from the N-terminus, the 144-residue chain is Acidic phospholipase A2 S15-109 (144 aa).

A signal peptide spans 1–19; that stretch reads MYPAHLLVLLAVCVSLLGA. Residues 20–27 constitute a propeptide that is removed on maturation; that stretch reads SDIPPQPL. Cystine bridges form between Cys38–Cys98, Cys54–Cys143, Cys56–Cys72, Cys71–Cys126, Cys78–Cys119, Cys87–Cys112, and Cys105–Cys117. 3 residues coordinate Ca(2+): Tyr55, Gly57, and Gly59. His75 is an active-site residue. A Ca(2+)-binding site is contributed by Asp76. Asp120 is a catalytic residue.

The protein belongs to the phospholipase A2 family. Group I subfamily. D49 sub-subfamily. Requires Ca(2+) as cofactor. In terms of tissue distribution, expressed by the venom gland.

It localises to the secreted. The enzyme catalyses a 1,2-diacyl-sn-glycero-3-phosphocholine + H2O = a 1-acyl-sn-glycero-3-phosphocholine + a fatty acid + H(+). Its function is as follows. Snake venom phospholipase A2 (PLA2) that inhibits collagen-induced platelet aggregation. PLA2 catalyzes the calcium-dependent hydrolysis of the 2-acyl groups in 3-sn-phosphoglycerides. The chain is Acidic phospholipase A2 S15-109 from Austrelaps superbus (Lowland copperhead snake).